The following is a 283-amino-acid chain: Diaminopimelate epimerase (283 aa).

3 residues coordinate substrate: Asn-13, Gln-45, and Asn-65. Cys-74 serves as the catalytic Proton donor. Substrate-binding positions include 75–76 (GN), Asn-156, Asn-190, and 208–209 (ER). Cys-217 serves as the catalytic Proton acceptor. 218-219 (GS) provides a ligand contact to substrate.

It belongs to the diaminopimelate epimerase family. As to quaternary structure, homodimer.

It localises to the cytoplasm. The enzyme catalyses (2S,6S)-2,6-diaminopimelate = meso-2,6-diaminopimelate. It participates in amino-acid biosynthesis; L-lysine biosynthesis via DAP pathway; DL-2,6-diaminopimelate from LL-2,6-diaminopimelate: step 1/1. In terms of biological role, catalyzes the stereoinversion of LL-2,6-diaminopimelate (L,L-DAP) to meso-diaminopimelate (meso-DAP), a precursor of L-lysine and an essential component of the bacterial peptidoglycan. This is Diaminopimelate epimerase from Bartonella tribocorum (strain CIP 105476 / IBS 506).